The primary structure comprises 283 residues: Protein boule-like (283 aa).

Positions 1 to 25 are disordered; that stretch reads MQTDSLSPSPNPVSPVPLNNPTSAP. The region spanning 33–110 is the RRM domain; that stretch reads NRIFVGGIDF…KKLNIGPAIR (78 aa). Positions 160 to 184 constitute a DAZ domain; it reads PSRSVCSSPVMVAQPIYQQPAYHYQ.

The protein belongs to the RRM DAZ family. Interacts with DAZ1 and DAZL. As to expression, testis specific. Not expressed in early embryos, primordial germ cells and spermatogonial cells. First expressed in the cytoplasm of spermatocytes and then persists through meiosis.

It localises to the cytoplasm. Functionally, probable RNA-binding protein, which may be required during spermatogenesis. May act by binding to the 3'-UTR of mRNAs and regulating their translation. This is Protein boule-like (BOLL) from Homo sapiens (Human).